We begin with the raw amino-acid sequence, 391 residues long: Immunoglobulin heavy constant alpha 2 (391 aa).

The Extracellular segment spans residues 1-357; the sequence is ASPTSPKVFP…TPGANLWPTT (357 aa). 3 consecutive Ig-like domains span residues 6 to 98, 112 to 207, and 215 to 317; these read PKVF…QDVT, PRLS…ANIT, and PEVH…KTID. Cys-26 and Cys-85 are oxidised to a cystine. N-linked (GlcNAc...) asparagine glycosylation occurs at Asn-47. Asn-92 carries N-linked (GlcNAc...) (complex) asparagine glycosylation. 2 disulfides stabilise this stretch: Cys-110–Cys-167 and Cys-134–Cys-191. Asn-131 carries N-linked (GlcNAc...) asparagine glycosylation. N-linked (GlcNAc...) (complex) asparagine glycosylation is present at Asn-205. Cys-237 and Cys-300 form a disulfide bridge. Asp-327 is a glycosylation site (N-linked (GlcNAc...) (complex) asparagine). A helical transmembrane segment spans residues 358–379; it reads ITFLTLFLLSLFYSTALTVTSV. The Cytoplasmic segment spans residues 380–391; sequence RGPSGKREGPQY.

Immunoglobulins are composed of two identical heavy chains and two identical light chains; disulfide-linked. Monomeric or polymeric. Part of the secretory IgA (sIgA) complex that consists of two, four or five IgA monomers, and two additional non-Ig polypeptides, namely the JCHAIN and the secretory component (the proteolytic product of PIGR).

It localises to the secreted. The protein localises to the cell membrane. Constant region of immunoglobulin heavy chains. Immunoglobulins, also known as antibodies, are membrane-bound or secreted glycoproteins produced by B lymphocytes. In the recognition phase of humoral immunity, the membrane-bound immunoglobulins serve as receptors which, upon binding of a specific antigen, trigger the clonal expansion and differentiation of B lymphocytes into immunoglobulins-secreting plasma cells. Secreted immunoglobulins mediate the effector phase of humoral immunity, which results in the elimination of bound antigens. The antigen binding site is formed by the variable domain of one heavy chain, together with that of its associated light chain. Thus, each immunoglobulin has two antigen binding sites with remarkable affinity for a particular antigen. The variable domains are assembled by a process called V-(D)-J rearrangement and can then be subjected to somatic hypermutations which, after exposure to antigen and selection, allow affinity maturation for a particular antigen. Ig alpha is the major immunoglobulin class in body secretions. This chain is Immunoglobulin heavy constant alpha 2, found in Homo sapiens (Human).